A 115-amino-acid polypeptide reads, in one-letter code: uncharacterized protein (115 aa).

A helical membrane pass occupies residues 36–56; the sequence is SFFSLGLIACFCIFLIIVLSE.

It localises to the membrane. This is an uncharacterized protein from Saccharomyces cerevisiae (strain ATCC 204508 / S288c) (Baker's yeast).